We begin with the raw amino-acid sequence, 316 residues long: Nucleotide-binding protein Sala_2050 (316 aa).

Residue 18–25 (GLSGAGKS) coordinates ATP. GTP is bound at residue 69–72 (DSRS). The disordered stretch occupies residues 283–316 (GYEPTLTHRNLDSAPQDGLEGKPPSAARASGGAR).

This sequence belongs to the RapZ-like family.

In terms of biological role, displays ATPase and GTPase activities. In Sphingopyxis alaskensis (strain DSM 13593 / LMG 18877 / RB2256) (Sphingomonas alaskensis), this protein is Nucleotide-binding protein Sala_2050.